Here is a 559-residue protein sequence, read N- to C-terminus: DNA ligase (559 aa).

Position 247 (Glu-247) interacts with ATP. The active-site N6-AMP-lysine intermediate is Lys-249. ATP contacts are provided by Arg-254, Arg-269, Glu-299, Phe-339, Arg-414, and Lys-420.

Belongs to the ATP-dependent DNA ligase family. It depends on Mg(2+) as a cofactor.

It carries out the reaction ATP + (deoxyribonucleotide)n-3'-hydroxyl + 5'-phospho-(deoxyribonucleotide)m = (deoxyribonucleotide)n+m + AMP + diphosphate.. DNA ligase that seals nicks in double-stranded DNA during DNA replication, DNA recombination and DNA repair. In Pyrococcus abyssi (strain GE5 / Orsay), this protein is DNA ligase.